Reading from the N-terminus, the 193-residue chain is Ion-translocating oxidoreductase complex subunit B (193 aa).

Residues 1-26 (MSTMLIAVILLTLLALFFGVLLGFAA) are hydrophobic. A 4Fe-4S domain is found at 32 to 90 (EGNPIVDELEAILPQTQCGQCGYPGCRPYAEAIANGDKVNKCPPGGTATMEKLASLMGV). Cysteine 49, cysteine 52, cysteine 57, cysteine 73, cysteine 114, cysteine 117, cysteine 120, cysteine 124, cysteine 144, cysteine 147, cysteine 150, and cysteine 154 together coordinate [4Fe-4S] cluster. 2 4Fe-4S ferredoxin-type domains span residues 105-134 (KVAYIREDECIGCTKCIQACPVDAIIGAGK) and 136-164 (MHTVLTADCTGCDLCVEPCPVDCIDMVPV).

This sequence belongs to the 4Fe4S bacterial-type ferredoxin family. RnfB subfamily. As to quaternary structure, the complex is composed of six subunits: RnfA, RnfB, RnfC, RnfD, RnfE and RnfG. The cofactor is [4Fe-4S] cluster.

The protein localises to the cell inner membrane. In terms of biological role, part of a membrane-bound complex that couples electron transfer with translocation of ions across the membrane. This chain is Ion-translocating oxidoreductase complex subunit B, found in Shewanella oneidensis (strain ATCC 700550 / JCM 31522 / CIP 106686 / LMG 19005 / NCIMB 14063 / MR-1).